A 227-amino-acid chain; its full sequence is Ion-translocating oxidoreductase complex subunit E (227 aa).

The next 5 membrane-spanning stretches (helical) occupy residues 34–56, 68–88, 91–111, 127–147, and 181–201; these read AINA…TIIS, IPIY…LLHA, FNLY…CIIV, FFDG…VGSI, and TIIL…LIAI.

This sequence belongs to the NqrDE/RnfAE family. As to quaternary structure, the complex is composed of six subunits: RnfA, RnfB, RnfC, RnfD, RnfE and RnfG.

It is found in the cell inner membrane. Functionally, part of a membrane-bound complex that couples electron transfer with translocation of ions across the membrane. This is Ion-translocating oxidoreductase complex subunit E from Buchnera aphidicola subsp. Acyrthosiphon pisum (strain 5A).